Consider the following 89-residue polypeptide: MALTQTKKQELISQYQAHETDTGSSELQVAFLTERINQLTEHLKANPKDHASRRGLLQMIGRRRGLLTYIQKKDQQRYQTLIGRLGIRR.

Residues 1 to 24 are disordered; sequence MALTQTKKQELISQYQAHETDTGS.

Belongs to the universal ribosomal protein uS15 family. Part of the 30S ribosomal subunit. Forms a bridge to the 50S subunit in the 70S ribosome, contacting the 23S rRNA.

In terms of biological role, one of the primary rRNA binding proteins, it binds directly to 16S rRNA where it helps nucleate assembly of the platform of the 30S subunit by binding and bridging several RNA helices of the 16S rRNA. Forms an intersubunit bridge (bridge B4) with the 23S rRNA of the 50S subunit in the ribosome. This Microcystis aeruginosa (strain NIES-843 / IAM M-2473) protein is Small ribosomal subunit protein uS15.